We begin with the raw amino-acid sequence, 719 residues long: Endonuclease MutS2 (719 aa).

Gly273 to Thr280 contributes to the ATP binding site. The region spanning Leu644–Lys719 is the Smr domain.

It belongs to the DNA mismatch repair MutS family. MutS2 subfamily. In terms of assembly, homodimer. Binds to stalled ribosomes, contacting rRNA.

Endonuclease that is involved in the suppression of homologous recombination and thus may have a key role in the control of bacterial genetic diversity. Its function is as follows. Acts as a ribosome collision sensor, splitting the ribosome into its 2 subunits. Detects stalled/collided 70S ribosomes which it binds and splits by an ATP-hydrolysis driven conformational change. Acts upstream of the ribosome quality control system (RQC), a ribosome-associated complex that mediates the extraction of incompletely synthesized nascent chains from stalled ribosomes and their subsequent degradation. Probably generates substrates for RQC. This chain is Endonuclease MutS2, found in Staphylococcus aureus.